A 396-amino-acid chain; its full sequence is Peroxisome proliferator-activated receptor delta (396 aa).

The segment at 1-24 is disordered; that stretch reads MKEEIPPRSPILDEQPSTPLEHQE. A compositionally biased stretch (polar residues) spans 15-24; it reads QPSTPLEHQE. The nuclear receptor DNA-binding region spans 28 to 102; sequence SVDCKICGDR…LGMSHNAIRF (75 aa). 2 consecutive NR C4-type zinc fingers follow at residues 31 to 51 and 68 to 90; these read CKIC…CEGC and CDRN…FNKC. Residues 166-394 enclose the NR LBD domain; the sequence is FVIHDMDTLW…HPLLQEIYRD (229 aa).

This sequence belongs to the nuclear hormone receptor family. NR1 subfamily. In terms of assembly, heterodimer with the retinoid X receptor. In terms of processing, 'Lys-48'-linked polyubiquitinated; leading to proteasomal degradation. Deubiquitinated and stabilized by OTUD3. Ubiquitous.

The protein resides in the nucleus. Its function is as follows. Ligand-activated transcription factor key mediator of energy metabolism in adipose tissues. Receptor that binds peroxisome proliferators such as hypolipidemic drugs and fatty acids. Has a preference for poly-unsaturated fatty acids, such as gamma-linoleic acid and eicosapentanoic acid. Once activated by a ligand, the receptor binds to promoter elements of target genes. Regulates the peroxisomal beta-oxidation pathway of fatty acids. Functions as a transcription activator for the acyl-CoA oxidase gene. Decreases expression of NPC1L1 once activated by a ligand. The sequence is that of Peroxisome proliferator-activated receptor delta (ppard) from Xenopus laevis (African clawed frog).